The sequence spans 480 residues: Methylenetetrahydrofolate--tRNA-(uracil-5-)-methyltransferase TrmFO (480 aa).

15 to 20 (GGGLAG) is a binding site for FAD.

This sequence belongs to the MnmG family. TrmFO subfamily. Requires FAD as cofactor.

It is found in the cytoplasm. The enzyme catalyses uridine(54) in tRNA + (6R)-5,10-methylene-5,6,7,8-tetrahydrofolate + NADH + H(+) = 5-methyluridine(54) in tRNA + (6S)-5,6,7,8-tetrahydrofolate + NAD(+). It catalyses the reaction uridine(54) in tRNA + (6R)-5,10-methylene-5,6,7,8-tetrahydrofolate + NADPH + H(+) = 5-methyluridine(54) in tRNA + (6S)-5,6,7,8-tetrahydrofolate + NADP(+). Functionally, catalyzes the folate-dependent formation of 5-methyl-uridine at position 54 (M-5-U54) in all tRNAs. This chain is Methylenetetrahydrofolate--tRNA-(uracil-5-)-methyltransferase TrmFO, found in Caulobacter sp. (strain K31).